The primary structure comprises 332 residues: Beta-chimaerin (332 aa).

A Phorbol-ester/DAG-type zinc finger spans residues 78–128 (THNFKVHTFRGPHWCEYCANFMWGLIAQGVRCSDCGLNVHKQCSKHVPNDC). The Rho-GAP domain occupies 141–332 (CDLTTLVKAH…ILIENEDVLF (192 aa)).

Its subcellular location is the membrane. With respect to regulation, in the inactive state, the N terminus protrudes into the active site of the Rho-GAP domain, sterically blocking Rac binding. Phospholipid binding to the Phorbol-ester/DAG-type zinc-finger/C1 domain triggers the cooperative dissociation of these interactions, allowing the N-terminus to move out of the active site and thereby activating the enzyme. GTPase-activating protein for p21-rac. This chain is Beta-chimaerin (Chn2), found in Mus musculus (Mouse).